The primary structure comprises 166 residues: Bacterial non-heme ferritin (166 aa).

Residues 2-145 (LSKDLLEALN…THIDYLNRIG (144 aa)) enclose the Ferritin-like diiron domain. Residues glutamate 17, glutamate 50, histidine 53, glutamate 94, and glutamine 127 each contribute to the Fe cation site.

Belongs to the ferritin family. Prokaryotic subfamily.

The protein localises to the cytoplasm. The enzyme catalyses 4 Fe(2+) + O2 + 6 H2O = 4 iron(III) oxide-hydroxide + 12 H(+). Iron-storage protein. The chain is Bacterial non-heme ferritin (ftnA) from Staphylococcus haemolyticus (strain JCSC1435).